The primary structure comprises 136 residues: Small ribosomal subunit protein uS9 (136 aa).

Positions Gly95–Arg136 are disordered. Over residues Asp99 to Ser116 the composition is skewed to basic and acidic residues. Basic residues predominate over residues Lys117–Arg136.

Belongs to the universal ribosomal protein uS9 family.

This Prochlorococcus marinus subsp. pastoris (strain CCMP1986 / NIES-2087 / MED4) protein is Small ribosomal subunit protein uS9.